The sequence spans 256 residues: Major prion protein (256 aa).

The N-terminal stretch at 1-24 is a signal peptide; the sequence is MVKSHIGSWILVLFVAMWSDVGLC. An interaction with GRB2, ERI3 and SYN1 region spans residues 25-233; it reads KKRPKPGGGW…ESQAYYQRGA (209 aa). Residues 28–110 form a disordered region; that stretch reads PKPGGGWNTG…QWNKPSKPKT (83 aa). Tandem repeats lie at residues 54 to 62, 63 to 70, 71 to 78, 79 to 86, and 87 to 95. Residues 54–95 form a 5 X 8 AA tandem repeats of P-H-G-G-G-W-G-Q region; it reads PQGAGGWGQPHGGGWGQPHGGGWGQPHGGGWGQPHGGGGWGQ. Residues 56 to 97 show a composition bias toward gly residues; that stretch reads GAGGWGQPHGGGWGQPHGGGWGQPHGGGWGQPHGGGGWGQGG. 12 residues coordinate Cu(2+): H64, G65, G66, H72, G73, G74, H80, G81, G82, H88, G90, and G91. Residues C182 and C217 are joined by a disulfide bond. N-linked (GlcNAc...) asparagine glycans are attached at residues N184 and N200. Residue A233 is the site of GPI-anchor amidated alanine attachment. Residues 234-256 constitute a propeptide, removed in mature form; sequence SVILFSSPPVILLISFLIFLIVG.

Belongs to the prion family. In terms of assembly, monomer and homodimer. Has a tendency to aggregate into amyloid fibrils containing a cross-beta spine, formed by a steric zipper of superposed beta-strands. Soluble oligomers may represent an intermediate stage on the path to fibril formation. Copper binding may promote oligomerization. Interacts with GRB2, APP, ERI3/PRNPIP and SYN1. Mislocalized cytosolically exposed PrP interacts with MGRN1; this interaction alters MGRN1 subcellular location and causes lysosomal enlargement. Interacts with KIAA1191.

It is found in the cell membrane. The protein resides in the golgi apparatus. Its primary physiological function is unclear. Has cytoprotective activity against internal or environmental stresses. May play a role in neuronal development and synaptic plasticity. May be required for neuronal myelin sheath maintenance. May play a role in iron uptake and iron homeostasis. Soluble oligomers are toxic to cultured neuroblastoma cells and induce apoptosis (in vitro). Association with GPC1 (via its heparan sulfate chains) targets PRNP to lipid rafts. Also provides Cu(2+) or Zn(2+) for the ascorbate-mediated GPC1 deaminase degradation of its heparan sulfate side chains. The polypeptide is Major prion protein (PRNP) (Moschus chrysogaster (Alpine musk deer)).